We begin with the raw amino-acid sequence, 593 residues long: MADHKGTDNIDHNDVLDGSWCLITEAECEDDTLVDLFEESTNDSVVSNLLDDSESIIQGNSEESDRCIQELKRKLNVTPEKQISELSPRLSAVHITPERASKRRLFNDSGVVEDEAESNTIQVDSLLVQKDAGNQNGAECELNSILRSNNIRATVLCKFKDKFGVSFNELTRSFKSDKTCTPNWVITAIGIREDLRDACKVLLQQHVEFLEMICNDFSVLLLVEFKVTKNRETVLKLMCSMLNAKEEQILCEPPKLKSTAAALYFYKKIITDTCFKYGTLPSWVSRLTIVEHQLASADTFSLSEMVQWAYDNDFTEEASVAYNYACYATENTNAAAFLASNMQVKYVKDCVAMVRMYKRQEMKSMTMSEWISKCCKEETIGEEWKEIVQFLKYQGVNFLEFLIALKQFFKCTPKKMCIVIYGPPDTGKSMFCFKLVQFLKGQVVSYINKSSQFWLMPLQDAKIGLLDDATHNCWIYLDTYLRNAFDGNTFCLDIKHKNLQQTKLPPMIITTNVNVTTDESLFYLRSRLTCFNFPNKLPMSDKDEPLFTISDKSWTCFFRKFWNQLELQEDAARDPGEPEHPFCCTARNSVDFD.

Positions 72 to 74 match the Nuclear localization signal motif; it reads KRK. The short motif at 86 to 95 is the Nuclear export signal element; it reads LSPRLSAVHI. Ser87 is subject to Phosphoserine; by host. Residues 134–297 are DNA-binding region; sequence NQNGAECELN…TIVEHQLASA (164 aa). One can recognise an SF3 helicase domain in the interval 382 to 546; that stretch reads EEWKEIVQFL…LPMSDKDEPL (165 aa). Position 422-429 (422-429) interacts with ATP; sequence GPPDTGKS. A Glycyl lysine isopeptide (Lys-Gly) (interchain with G-Cter in SUMO) cross-link involves residue Lys503.

The protein belongs to the papillomaviridae E1 protein family. As to quaternary structure, can form hexamers. Interacts with E2 protein; this interaction increases E1 DNA binding specificity. Interacts with host DNA polymerase subunit POLA2. Interacts with host single stranded DNA-binding protein RPA1. Interacts with host TOP1; this interaction stimulates the enzymatic activity of TOP1. Phosphorylated. Post-translationally, sumoylated.

The protein localises to the host nucleus. The enzyme catalyses Couples ATP hydrolysis with the unwinding of duplex DNA by translocating in the 3'-5' direction.. The catalysed reaction is ATP + H2O = ADP + phosphate + H(+). In terms of biological role, ATP-dependent DNA 3'-5' helicase required for initiation of viral DNA replication. It forms a complex with the viral E2 protein. The E1-E2 complex binds to the replication origin which contains binding sites for both proteins. During the initial step, a dimer of E1 interacts with a dimer of protein E2 leading to a complex that binds the viral origin of replication with high specificity. Then, a second dimer of E1 displaces the E2 dimer in an ATP-dependent manner to form the E1 tetramer. Following this, two E1 monomers are added to each half of the site, which results in the formation of two E1 trimers on the viral ori. Subsequently, two hexamers will be created. The double hexamer acts as a bi-directional helicase machinery and unwinds the viral DNA and then recruits the host DNA polymerase to start replication. In Human papillomavirus type 48, this protein is Replication protein E1.